The following is a 407-amino-acid chain: Biflaviolin synthase CYP158A1 (407 aa).

Residues 1-11 (MTQETTTLTGQ) show a composition bias toward polar residues. A disordered region spans residues 1–20 (MTQETTTLTGQSPPPVRDWP). Residues R92, Y199, and 290–291 (HR) each bind flaviolin. Heme is bound at residue C356.

It belongs to the cytochrome P450 family. Requires heme as cofactor.

The enzyme catalyses 2 flaviolin + 2 reduced [2Fe-2S]-[ferredoxin] + O2 + H(+) = 3,3'-biflaviolin + 2 oxidized [2Fe-2S]-[ferredoxin] + 2 H2O. It catalyses the reaction 2 flaviolin + 2 reduced [2Fe-2S]-[ferredoxin] + O2 + H(+) = 3,8'-biflaviolin + 2 oxidized [2Fe-2S]-[ferredoxin] + 2 H2O. Its pathway is pigment biosynthesis. Catalyzes oxidative C-C coupling reaction to polymerize flaviolin and form highly conjugated pigments which protect the soil bacterium from deleterious effects of UV irradiation (two isomers of biflaviolin and one triflaviolin). The polypeptide is Biflaviolin synthase CYP158A1 (Streptomyces coelicolor (strain ATCC BAA-471 / A3(2) / M145)).